Here is a 92-residue protein sequence, read N- to C-terminus: MSAEVALVYRVLPDSVEVNIDKLKTDIINKLSPKYKVDKVEVEEIGFGIKALRFYIRMPESEEYSSDEVEELLRSVEGVGGYELEYFSRLSF.

This sequence belongs to the EF-1-beta/EF-1-delta family.

Its function is as follows. Promotes the exchange of GDP for GTP in EF-1-alpha/GDP, thus allowing the regeneration of EF-1-alpha/GTP that could then be used to form the ternary complex EF-1-alpha/GTP/AAtRNA. The polypeptide is Elongation factor 1-beta (Pyrobaculum arsenaticum (strain DSM 13514 / JCM 11321 / PZ6)).